A 333-amino-acid chain; its full sequence is Flagellar P-ring protein (333 aa).

A signal peptide spans 1–22 (MRRNILSMFLFITLIIYSSIFA).

It belongs to the FlgI family. As to quaternary structure, the basal body constitutes a major portion of the flagellar organelle and consists of four rings (L,P,S, and M) mounted on a central rod.

It localises to the periplasm. The protein localises to the bacterial flagellum basal body. In terms of biological role, assembles around the rod to form the L-ring and probably protects the motor/basal body from shearing forces during rotation. The chain is Flagellar P-ring protein from Fervidobacterium nodosum (strain ATCC 35602 / DSM 5306 / Rt17-B1).